Reading from the N-terminus, the 425-residue chain is GTPase Obg (425 aa).

The Obg domain maps to 1-158 (MFIDKAKIYV…REIILELKLL (158 aa)). The region spanning 159 to 331 (ADVGLVGFPN…LMAEVSKTLA (173 aa)) is the OBG-type G domain. Residues 165–172 (GFPNVGKS), 190–194 (FTTLK), 212–215 (DIPG), 282–285 (NKSD), and 312–314 (SAA) contribute to the GTP site. Residues Ser172 and Thr192 each coordinate Mg(2+). The region spanning 345-425 (LFIPEEKRFT…LNDFEFEFVI (81 aa)) is the OCT domain.

This sequence belongs to the TRAFAC class OBG-HflX-like GTPase superfamily. OBG GTPase family. As to quaternary structure, monomer. It depends on Mg(2+) as a cofactor.

Its subcellular location is the cytoplasm. In terms of biological role, an essential GTPase which binds GTP, GDP and possibly (p)ppGpp with moderate affinity, with high nucleotide exchange rates and a fairly low GTP hydrolysis rate. Plays a role in control of the cell cycle, stress response, ribosome biogenesis and in those bacteria that undergo differentiation, in morphogenesis control. The polypeptide is GTPase Obg (Clostridium tetani (strain Massachusetts / E88)).